Consider the following 35-residue polypeptide: Photosystem II reaction center protein T (35 aa).

Residues 3-23 (ALVYTFLLVSTLGIIFFAIFF) traverse the membrane as a helical segment.

The protein belongs to the PsbT family. In terms of assembly, PSII is composed of 1 copy each of membrane proteins PsbA, PsbB, PsbC, PsbD, PsbE, PsbF, PsbH, PsbI, PsbJ, PsbK, PsbL, PsbM, PsbT, PsbY, PsbZ, Psb30/Ycf12, at least 3 peripheral proteins of the oxygen-evolving complex and a large number of cofactors. It forms dimeric complexes.

It is found in the plastid. The protein resides in the chloroplast thylakoid membrane. Its function is as follows. Found at the monomer-monomer interface of the photosystem II (PS II) dimer, plays a role in assembly and dimerization of PSII. PSII is a light-driven water plastoquinone oxidoreductase, using light energy to abstract electrons from H(2)O, generating a proton gradient subsequently used for ATP formation. This Gossypium barbadense (Sea Island cotton) protein is Photosystem II reaction center protein T.